Consider the following 351-residue polypeptide: tRNA uridine(34) hydroxylase (351 aa).

In terms of domain architecture, Rhodanese spans D146–L240. Residue C200 is the Cysteine persulfide intermediate of the active site.

Belongs to the TrhO family.

It catalyses the reaction uridine(34) in tRNA + AH2 + O2 = 5-hydroxyuridine(34) in tRNA + A + H2O. Catalyzes oxygen-dependent 5-hydroxyuridine (ho5U) modification at position 34 in tRNAs. The chain is tRNA uridine(34) hydroxylase from Sodalis glossinidius (strain morsitans).